The sequence spans 121 residues: UPF0295 protein OB0906 (121 aa).

2 helical membrane passes run 14–34 (IRTF…GGIL) and 43–63 (VIFF…YVWI).

Belongs to the UPF0295 family.

The protein resides in the cell membrane. The protein is UPF0295 protein OB0906 of Oceanobacillus iheyensis (strain DSM 14371 / CIP 107618 / JCM 11309 / KCTC 3954 / HTE831).